A 312-amino-acid polypeptide reads, in one-letter code: MNIMTANQGAVSPSQTESEASPPTFSHVPVLATEIVEALAPAPGKVFVDGTLGGAGHTRLLLGRGATVYGIDQDPYALDRARQAALPGLHVLQGNYRDMAELLPAAGVTQVDGILLDIGVSSFQLDDAGRGFSYHTEAPLDMRMSQSGESAADVVNDLDETELAALIYEYGEERHSRRIARFIVQAREKAPIETTVQLAEIIKRAYPGFSKGIHPARRTFQALRIYVNDELGALRDGLSAAEGLLAPGGRLAVISFHSLEDRIVKRFLLGSDVLTPLTKRPIVAAESEQVDNPRARSAKLRVGERAAAPEGS.

A disordered region spans residues methionine 1–threonine 24. Residues alanine 55–histidine 57, aspartate 72, tyrosine 96, aspartate 117, and glutamine 124 contribute to the S-adenosyl-L-methionine site. The segment at glutamate 288–serine 312 is disordered.

This sequence belongs to the methyltransferase superfamily. RsmH family.

It localises to the cytoplasm. It catalyses the reaction cytidine(1402) in 16S rRNA + S-adenosyl-L-methionine = N(4)-methylcytidine(1402) in 16S rRNA + S-adenosyl-L-homocysteine + H(+). Functionally, specifically methylates the N4 position of cytidine in position 1402 (C1402) of 16S rRNA. In Deinococcus radiodurans (strain ATCC 13939 / DSM 20539 / JCM 16871 / CCUG 27074 / LMG 4051 / NBRC 15346 / NCIMB 9279 / VKM B-1422 / R1), this protein is Ribosomal RNA small subunit methyltransferase H.